We begin with the raw amino-acid sequence, 348 residues long: Dihydroorotase (348 aa).

Zn(2+)-binding residues include His-17 and His-19. Substrate is bound by residues 19 to 21 and Asn-45; that span reads HLR. Zn(2+)-binding residues include Lys-103, His-140, and His-178. At Lys-103 the chain carries N6-carboxylysine. Position 140 (His-140) interacts with substrate. Leu-223 contacts substrate. Asp-251 is a binding site for Zn(2+). Asp-251 is an active-site residue. Positions 255 and 267 each coordinate substrate.

The protein belongs to the metallo-dependent hydrolases superfamily. DHOase family. Class II DHOase subfamily. In terms of assembly, homodimer. Zn(2+) serves as cofactor.

It carries out the reaction (S)-dihydroorotate + H2O = N-carbamoyl-L-aspartate + H(+). It participates in pyrimidine metabolism; UMP biosynthesis via de novo pathway; (S)-dihydroorotate from bicarbonate: step 3/3. Its function is as follows. Catalyzes the reversible cyclization of carbamoyl aspartate to dihydroorotate. This chain is Dihydroorotase, found in Salmonella agona (strain SL483).